Consider the following 281-residue polypeptide: 2,3,4,5-tetrahydropyridine-2,6-dicarboxylate N-succinyltransferase (281 aa).

The protein belongs to the transferase hexapeptide repeat family.

The protein localises to the cytoplasm. The enzyme catalyses (S)-2,3,4,5-tetrahydrodipicolinate + succinyl-CoA + H2O = (S)-2-succinylamino-6-oxoheptanedioate + CoA. It participates in amino-acid biosynthesis; L-lysine biosynthesis via DAP pathway; LL-2,6-diaminopimelate from (S)-tetrahydrodipicolinate (succinylase route): step 1/3. This is 2,3,4,5-tetrahydropyridine-2,6-dicarboxylate N-succinyltransferase from Methylobacterium sp. (strain 4-46).